We begin with the raw amino-acid sequence, 545 residues long: Indole-3-pyruvate decarboxylase (545 aa).

Glutamate 48 serves as a coordination point for thiamine diphosphate. The segment at 382–460 is thiamine pyrophosphate binding; the sequence is DCLFTAMDMI…VILFNNASWE (79 aa). The Mg(2+) site is built by aspartate 429 and asparagine 456.

Belongs to the TPP enzyme family. A metal cation serves as cofactor. Thiamine diphosphate is required as a cofactor.

It carries out the reaction indole-3-pyruvate + H(+) = indole-3-acetaldehyde + CO2. It participates in plant hormone metabolism; auxin biosynthesis. The sequence is that of Indole-3-pyruvate decarboxylase (ipdC) from Azospirillum brasilense.